Here is a 300-residue protein sequence, read N- to C-terminus: Sulfate adenylyltransferase subunit 2 (300 aa).

The segment at 281–300 (RAIDRDEAGSMEKKKREGYF) is disordered.

Belongs to the PAPS reductase family. CysD subfamily. As to quaternary structure, heterodimer composed of CysD, the smaller subunit, and CysN.

The catalysed reaction is sulfate + ATP + H(+) = adenosine 5'-phosphosulfate + diphosphate. The protein operates within sulfur metabolism; hydrogen sulfide biosynthesis; sulfite from sulfate: step 1/3. In terms of biological role, with CysN forms the ATP sulfurylase (ATPS) that catalyzes the adenylation of sulfate producing adenosine 5'-phosphosulfate (APS) and diphosphate, the first enzymatic step in sulfur assimilation pathway. APS synthesis involves the formation of a high-energy phosphoric-sulfuric acid anhydride bond driven by GTP hydrolysis by CysN coupled to ATP hydrolysis by CysD. This is Sulfate adenylyltransferase subunit 2 from Brucella canis (strain ATCC 23365 / NCTC 10854 / RM-666).